Here is a 535-residue protein sequence, read N- to C-terminus: UDP-glucuronosyltransferase 1A1 (535 aa).

A signal peptide spans 1-29 (MTVVCWSSRLLLLLPYLLLCVFGPSASHA). N-linked (GlcNAc...) asparagine glycans are attached at residues asparagine 89, asparagine 297, and asparagine 435. The chain crosses the membrane as a helical span at residues 493 to 509 (VIGFLLAIVLTVVFIVF).

Belongs to the UDP-glycosyltransferase family. In terms of assembly, homodimers. Homooligomer. Interacts with UGT1A3, UGT1A4, UGT1A6, UGT1A7, UGT1A8, UGT1A9 and UGT1A10 to form heterodimers. In terms of tissue distribution, highly expressed in liver and at lower levels in colon, kidney, stomach and intestine.

The protein localises to the endoplasmic reticulum membrane. The enzyme catalyses glucuronate acceptor + UDP-alpha-D-glucuronate = acceptor beta-D-glucuronoside + UDP + H(+). It catalyses the reaction 17beta-estradiol + UDP-alpha-D-glucuronate = 17beta-estradiol 3-O-(beta-D-glucuronate) + UDP + H(+). The catalysed reaction is 2-hydroxyestrone + UDP-alpha-D-glucuronate = 2-hydroxyestrone 3-O-(beta-D-glucuronate) + UDP + H(+). It carries out the reaction 2-hydroxy-17beta-estradiol + UDP-alpha-D-glucuronate = 2-hydroxy-17beta-estradiol 3-O-(beta-D-glucuronate) + UDP + H(+). The enzyme catalyses 2-methoxy-17beta-estradiol + UDP-alpha-D-glucuronate = 2-methoxy-17beta-estradiol 3-O-(beta-D-glucuronate) + UDP + H(+). It catalyses the reaction 17alpha-estradiol + UDP-alpha-D-glucuronate = 17alpha-estradiol 3-O-(beta-D-glucuronate) + UDP + H(+). The catalysed reaction is 16beta,17beta-estriol + UDP-alpha-D-glucuronate = 16beta,17beta-estriol 16-O-(beta-D-glucuronate) + UDP + H(+). It carries out the reaction losartan + UDP-alpha-D-glucuronate = losartan-2-N-beta-D-glucuronide + UDP. The enzyme catalyses prunetin + UDP-alpha-D-glucuronate = prunetin-4'-O-beta-D-glucuronide + UDP. It catalyses the reaction SN-38 + UDP-alpha-D-glucuronate = SN-38 O-beta-D-glucuronide + UDP + H(+). The catalysed reaction is (4Z,15Z)-bilirubin IXalpha + UDP-alpha-D-glucuronate = (4Z,15Z)-bilirubin IXalpha C12-beta-D-glucuronoside + UDP. It carries out the reaction (4Z,15Z)-bilirubin IXalpha + UDP-alpha-D-glucuronate = (4Z,15Z)-bilirubin IXalpha C8-beta-D-glucuronoside + UDP. The enzyme catalyses (4Z,15Z)-bilirubin IXalpha C8-beta-D-glucuronoside + UDP-alpha-D-glucuronate = (4Z,15Z)-bilirubin IXalpha C8,C12-beta-D-bisglucuronoside + UDP. It catalyses the reaction (4Z,15Z)-bilirubin IXalpha C12-beta-D-glucuronoside + UDP-alpha-D-glucuronate = (4Z,15Z)-bilirubin IXalpha C8,C12-beta-D-bisglucuronoside + UDP. The catalysed reaction is 8-iso-prostaglandin F2alpha + UDP-alpha-D-glucuronate = 8-iso-prostaglandin F2alpha-glucuronide + UDP + H(+). It carries out the reaction (5Z,8Z,11Z,14Z)-eicosatetraenoate + UDP-alpha-D-glucuronate = O-[(5Z),(8Z),(11Z),(14Z)-eicosatetraenoyl]-beta-D-glucuronate + UDP. The enzyme catalyses 15-hydroxy-(5Z,8Z,11Z,13E)-eicosatetraenoate + UDP-alpha-D-glucuronate = 15-O-(beta-D-glucuronosyl)-(5Z,8Z,11Z,14Z)-eicosatetraenoate + UDP + H(+). It catalyses the reaction 20-hydroxy-(5Z,8Z,11Z,14Z)-eicosatetraenoate + UDP-alpha-D-glucuronate = 20-O-(beta-D-glucuronosyl)-(5Z,8Z,11Z,14Z)-eicosatetraenoate + UDP + H(+). The catalysed reaction is prostaglandin B1 + UDP-alpha-D-glucuronate = 15-O-(beta-D-glucuronosyl)-prostaglandin B1 + UDP + H(+). It carries out the reaction (E)-ferulate + UDP-alpha-D-glucuronate = (E)-4-O-(beta-D-glucuronosyl)-ferulate + UDP + H(+). The enzyme catalyses (E)-ferulate + UDP-alpha-D-glucuronate = (E)-ferulic acid beta-D-glucuronate ester + UDP. Its function is as follows. UDP-glucuronosyltransferase (UGT) that catalyzes phase II biotransformation reactions in which lipophilic substrates are conjugated with glucuronic acid to increase the metabolite's water solubility, thereby facilitating excretion into either the urine or bile. Essential for the elimination and detoxification of drugs, xenobiotics and endogenous compounds. Catalyzes the glucuronidation of endogenous estrogen hormones such as estradiol, estrone and estriol. Involved in the glucuronidation of bilirubin, a degradation product occurring in the normal catabolic pathway that breaks down heme in vertebrates. Involved in the glucuronidation of arachidonic acid (AA) and AA-derived eicosanoids including 15-HETE, 20-HETE, PGB1 and F2-isoprostane (8-iso-PGF2alpha). Involved in the glucuronidation of the phytochemical ferulic acid at the phenolic or the carboxylic acid group. Also catalyzes the glucuronidation the isoflavones genistein, daidzein, glycitein, formononetin, biochanin A and prunetin, which are phytoestrogens with anticancer and cardiovascular properties. Involved in the glucuronidation of the AGTR1 angiotensin receptor antagonist losartan, a drug which can inhibit the effect of angiotensin II. Involved in the biotransformation of 7-ethyl-10-hydroxycamptothecin (SN-38), the pharmacologically active metabolite of the anticancer drug irinotecan. The sequence is that of UDP-glucuronosyltransferase 1A1 from Mus musculus (Mouse).